A 295-amino-acid chain; its full sequence is Putative fused nickel transport protein NikMN (295 aa).

8 helical membrane passes run 8–28 (LDLSIAGLFYILSIAVLGYSI), 39–59 (LFGIVAAAIFAAQMLNWPIPG), 70–90 (LAGILLGPYAGALAMAVVLTI), 98–118 (GGITALGANVWNMAIVNVFVG), 135–155 (FIAGWIGITLAAIFAGIEIGI), 175–195 (ALLGLVEGTITAGVVSYIAAA), 211–231 (LAVIAAMIAVSPLFAYAAELV), and 268–288 (AGTLIAGIVGTVIVLALGFAL).

It belongs to the CbiM family. NikM subfamily.

Its subcellular location is the cell membrane. Its function is as follows. May be involved in nickel transport. This Archaeoglobus fulgidus (strain ATCC 49558 / DSM 4304 / JCM 9628 / NBRC 100126 / VC-16) protein is Putative fused nickel transport protein NikMN.